The chain runs to 456 residues: RUN domain-containing protein 3B (456 aa).

The segment at 1-26 (MASRSLGGLSGIRGGGGGGGKKSLSS) is disordered. A compositionally biased stretch (gly residues) spans 8–21 (GLSGIRGGGGGGGK). Arg13 bears the Omega-N-methylarginine mark. The region spanning 57–189 (DDSSPEFNNF…IDFSFCLKGE (133 aa)) is the RUN domain. Residues Ser215 and Ser216 each carry the phosphoserine modification. Positions 300–325 (AHKLEKEQLEYIIVELQDQLTVLKNN) form a coiled coil. The disordered stretch occupies residues 382–405 (SLSQTSLDPGQSQEGDGKQDTLNI).

It belongs to the RUNDC3 family. Interacts with RAP2A.

In Macaca fascicularis (Crab-eating macaque), this protein is RUN domain-containing protein 3B (RUNDC3B).